Reading from the N-terminus, the 192-residue chain is Orotate phosphoribosyltransferase (192 aa).

116 to 124 (EDIVTTGLS) contacts 5-phospho-alpha-D-ribose 1-diphosphate. Orotate-binding residues include Thr120 and Arg148.

This sequence belongs to the purine/pyrimidine phosphoribosyltransferase family. PyrE subfamily. In terms of assembly, homodimer. It depends on Mg(2+) as a cofactor.

The enzyme catalyses orotidine 5'-phosphate + diphosphate = orotate + 5-phospho-alpha-D-ribose 1-diphosphate. The protein operates within pyrimidine metabolism; UMP biosynthesis via de novo pathway; UMP from orotate: step 1/2. In terms of biological role, catalyzes the transfer of a ribosyl phosphate group from 5-phosphoribose 1-diphosphate to orotate, leading to the formation of orotidine monophosphate (OMP). The sequence is that of Orotate phosphoribosyltransferase from Brucella canis (strain ATCC 23365 / NCTC 10854 / RM-666).